A 502-amino-acid chain; its full sequence is CBL-interacting protein kinase 11 (502 aa).

Positions 12–267 constitute a Protein kinase domain; sequence YEVGKQLGQG…IPRIKRSTWY (256 aa). ATP contacts are provided by residues 18 to 26 and lysine 41; that span reads LGQGTFAKV. The Proton acceptor role is filled by aspartate 135. The interval 153 to 182 is activation loop; the sequence is DFGLSALAESKRQDGLLHTTCGTPAYVAPE. Positions 297 to 333 constitute an NAF domain; it reads AECSTSEENQGSLSLPNLNAFDIISLSTGFNLSGFFE. Residues 339–367 are PPI; it reads QEERFTTRQPVTTVLGKLKELAKRLKLKV. The tract at residues 447-502 is disordered; the sequence is LQGEQQQSPLPPELPQDQLQPSLPQQEKQDMPEPPLLPQVPQEEVQTSIPAEQTKN. Residues 461–472 are compositionally biased toward low complexity; the sequence is PQDQLQPSLPQQ. Residues 493-502 show a composition bias toward polar residues; that stretch reads TSIPAEQTKN.

Belongs to the protein kinase superfamily. CAMK Ser/Thr protein kinase family. SNF1 subfamily. Mn(2+) is required as a cofactor.

It catalyses the reaction L-seryl-[protein] + ATP = O-phospho-L-seryl-[protein] + ADP + H(+). The enzyme catalyses L-threonyl-[protein] + ATP = O-phospho-L-threonyl-[protein] + ADP + H(+). CIPK serine-threonine protein kinases interact with CBL proteins. Binding of a CBL protein to the regulatory NAF domain of CIPK protein lead to the activation of the kinase in a calcium-dependent manner. In Oryza sativa subsp. japonica (Rice), this protein is CBL-interacting protein kinase 11 (CIPK11).